The following is a 231-amino-acid chain: Heptaprenylglyceryl phosphate synthase (231 aa).

Residue Lys-12 coordinates sn-glycerol 1-phosphate. Residues Asp-14 and Thr-40 each contribute to the Mg(2+) site. Sn-glycerol 1-phosphate-binding positions include 159–164, Gly-189, and 209–210; these read YMEYSG and GN.

It belongs to the GGGP/HepGP synthase family. Group I subfamily. As to quaternary structure, homodimer. Mg(2+) is required as a cofactor.

The catalysed reaction is sn-glycerol 1-phosphate + all-trans-heptaprenyl diphosphate = 3-heptaprenyl-sn-glycero-1-phosphate + diphosphate. Its pathway is membrane lipid metabolism; glycerophospholipid metabolism. Prenyltransferase that catalyzes in vivo the transfer of the heptaprenyl moiety of heptaprenyl pyrophosphate (HepPP; 35 carbon atoms) to the C3 hydroxyl of sn-glycerol-1-phosphate (G1P), producing heptaprenylglyceryl phosphate (HepGP). This reaction is an ether-bond-formation step in the biosynthesis of archaea-type G1P-based membrane lipids found in Bacillales. The sequence is that of Heptaprenylglyceryl phosphate synthase from Brevibacillus brevis (strain 47 / JCM 6285 / NBRC 100599).